We begin with the raw amino-acid sequence, 158 residues long: SsrA-binding protein (158 aa).

Positions 131-158 are disordered; sequence GKKTHDKRETEKKRDWNREKARLLRDRG. Positions 136–158 are enriched in basic and acidic residues; it reads DKRETEKKRDWNREKARLLRDRG.

It belongs to the SmpB family.

It is found in the cytoplasm. Required for rescue of stalled ribosomes mediated by trans-translation. Binds to transfer-messenger RNA (tmRNA), required for stable association of tmRNA with ribosomes. tmRNA and SmpB together mimic tRNA shape, replacing the anticodon stem-loop with SmpB. tmRNA is encoded by the ssrA gene; the 2 termini fold to resemble tRNA(Ala) and it encodes a 'tag peptide', a short internal open reading frame. During trans-translation Ala-aminoacylated tmRNA acts like a tRNA, entering the A-site of stalled ribosomes, displacing the stalled mRNA. The ribosome then switches to translate the ORF on the tmRNA; the nascent peptide is terminated with the 'tag peptide' encoded by the tmRNA and targeted for degradation. The ribosome is freed to recommence translation, which seems to be the essential function of trans-translation. In Brucella abortus biovar 1 (strain 9-941), this protein is SsrA-binding protein.